The sequence spans 420 residues: Protein translocase subunit SecY (420 aa).

A run of 10 helical transmembrane segments spans residues 9-29 (ILIT…PIPG), 61-81 (LSII…MELL), 104-124 (IVRY…SVGL), 141-161 (VFMI…MWIG), 173-193 (ISLI…SGTF), 203-223 (ILML…IIYV), 257-277 (LSGV…STIL), 300-320 (YNIL…SIVF), 355-375 (KLTL…WILV), and 377-397 (AMGV…QVAI).

This sequence belongs to the SecY/SEC61-alpha family. Component of the Sec protein translocase complex. Heterotrimer consisting of SecY, SecE and SecG subunits. The heterotrimers can form oligomers, although 1 heterotrimer is thought to be able to translocate proteins. Interacts with the ribosome. Interacts with SecDF, and other proteins may be involved. Interacts with SecA.

Its subcellular location is the cell inner membrane. Its function is as follows. The central subunit of the protein translocation channel SecYEG. Consists of two halves formed by TMs 1-5 and 6-10. These two domains form a lateral gate at the front which open onto the bilayer between TMs 2 and 7, and are clamped together by SecE at the back. The channel is closed by both a pore ring composed of hydrophobic SecY resides and a short helix (helix 2A) on the extracellular side of the membrane which forms a plug. The plug probably moves laterally to allow the channel to open. The ring and the pore may move independently. The chain is Protein translocase subunit SecY from Helicobacter pylori (strain J99 / ATCC 700824) (Campylobacter pylori J99).